The primary structure comprises 273 residues: HTH-type transcriptional activator RhaS (273 aa).

An HTH araC/xylS-type domain is found at 174–272 (YQLLDWLQNN…SQSPRDLRSQ (99 aa)). DNA-binding regions (H-T-H motif) lie at residues 191–212 (PELA…KNKT) and 239–262 (VTDI…KREF).

Binds DNA as a dimer.

The protein resides in the cytoplasm. Its function is as follows. Activates expression of the rhaBAD and rhaT operons. The protein is HTH-type transcriptional activator RhaS of Yersinia pestis bv. Antiqua (strain Angola).